The following is a 443-amino-acid chain: Thymidine phosphorylase (443 aa).

It belongs to the thymidine/pyrimidine-nucleoside phosphorylase family. As to quaternary structure, homodimer.

It catalyses the reaction thymidine + phosphate = 2-deoxy-alpha-D-ribose 1-phosphate + thymine. It participates in pyrimidine metabolism; dTMP biosynthesis via salvage pathway; dTMP from thymine: step 1/2. Its function is as follows. The enzymes which catalyze the reversible phosphorolysis of pyrimidine nucleosides are involved in the degradation of these compounds and in their utilization as carbon and energy sources, or in the rescue of pyrimidine bases for nucleotide synthesis. This Shewanella loihica (strain ATCC BAA-1088 / PV-4) protein is Thymidine phosphorylase.